We begin with the raw amino-acid sequence, 409 residues long: Tyrosine--tRNA ligase (409 aa).

The short motif at 54–63 (PTAPDIHLGH) is the 'HIGH' region element. The short motif at 238–242 (KMSKS) is the 'KMSKS' region element. An ATP-binding site is contributed by Lys-241. Residues 347-407 (QGILRILREA…GKRKFARVKL (61 aa)) form the S4 RNA-binding domain.

It belongs to the class-I aminoacyl-tRNA synthetase family. TyrS type 2 subfamily. Homodimer.

It localises to the cytoplasm. It carries out the reaction tRNA(Tyr) + L-tyrosine + ATP = L-tyrosyl-tRNA(Tyr) + AMP + diphosphate + H(+). In terms of biological role, catalyzes the attachment of tyrosine to tRNA(Tyr) in a two-step reaction: tyrosine is first activated by ATP to form Tyr-AMP and then transferred to the acceptor end of tRNA(Tyr). The chain is Tyrosine--tRNA ligase from Bordetella pertussis (strain Tohama I / ATCC BAA-589 / NCTC 13251).